Consider the following 364-residue polypeptide: tRNA 2-selenouridine synthase (364 aa).

Residues 14-137 (LIADTPIIDV…LRQTAIQATI (124 aa)) form the Rhodanese domain. The S-selanylcysteine intermediate role is filled by cysteine 97.

Belongs to the SelU family. In terms of assembly, monomer.

The enzyme catalyses 5-methylaminomethyl-2-thiouridine(34) in tRNA + selenophosphate + (2E)-geranyl diphosphate + H2O + H(+) = 5-methylaminomethyl-2-selenouridine(34) in tRNA + (2E)-thiogeraniol + phosphate + diphosphate. It carries out the reaction 5-methylaminomethyl-2-thiouridine(34) in tRNA + (2E)-geranyl diphosphate = 5-methylaminomethyl-S-(2E)-geranyl-thiouridine(34) in tRNA + diphosphate. It catalyses the reaction 5-methylaminomethyl-S-(2E)-geranyl-thiouridine(34) in tRNA + selenophosphate + H(+) = 5-methylaminomethyl-2-(Se-phospho)selenouridine(34) in tRNA + (2E)-thiogeraniol. The catalysed reaction is 5-methylaminomethyl-2-(Se-phospho)selenouridine(34) in tRNA + H2O = 5-methylaminomethyl-2-selenouridine(34) in tRNA + phosphate. In terms of biological role, involved in the post-transcriptional modification of the uridine at the wobble position (U34) of tRNA(Lys), tRNA(Glu) and tRNA(Gln). Catalyzes the conversion of 2-thiouridine (S2U-RNA) to 2-selenouridine (Se2U-RNA). Acts in a two-step process involving geranylation of 2-thiouridine (S2U) to S-geranyl-2-thiouridine (geS2U) and subsequent selenation of the latter derivative to 2-selenouridine (Se2U) in the tRNA chain. This is tRNA 2-selenouridine synthase from Escherichia fergusonii (strain ATCC 35469 / DSM 13698 / CCUG 18766 / IAM 14443 / JCM 21226 / LMG 7866 / NBRC 102419 / NCTC 12128 / CDC 0568-73).